The primary structure comprises 486 residues: Ribosomal RNA small subunit methyltransferase F (486 aa).

S-adenosyl-L-methionine-binding positions include Ala124–Lys130, Glu148, Asp175, and Asp193. Cys246 acts as the Nucleophile in catalysis.

The protein belongs to the class I-like SAM-binding methyltransferase superfamily. RsmB/NOP family.

It localises to the cytoplasm. It carries out the reaction cytidine(1407) in 16S rRNA + S-adenosyl-L-methionine = 5-methylcytidine(1407) in 16S rRNA + S-adenosyl-L-homocysteine + H(+). Functionally, specifically methylates the cytosine at position 1407 (m5C1407) of 16S rRNA. The sequence is that of Ribosomal RNA small subunit methyltransferase F from Shewanella baltica (strain OS223).